The chain runs to 236 residues: Cell division protein FtsQ (236 aa).

Topologically, residues 1–14 are cytoplasmic; that stretch reads MWDNHQALNQVADW. The helical transmembrane segment at 15 to 37 threads the bilayer; it reads LFTLAGLTTIYLMVQWTIHLPLL. Residues 37–111 form the POTRA domain; it reads LPLKEVHIRS…NGLDVVVEEH (75 aa). Over 38 to 236 the chain is Periplasmic; sequence PLKEVHIRSN…VSGFAARGTR (199 aa).

It belongs to the FtsQ/DivIB family. FtsQ subfamily. In terms of assembly, part of a complex composed of FtsB, FtsL and FtsQ.

It localises to the cell inner membrane. Its function is as follows. Essential cell division protein. May link together the upstream cell division proteins, which are predominantly cytoplasmic, with the downstream cell division proteins, which are predominantly periplasmic. May control correct divisome assembly. The chain is Cell division protein FtsQ from Nitrosospira multiformis (strain ATCC 25196 / NCIMB 11849 / C 71).